A 608-amino-acid chain; its full sequence is Histone-arginine methyltransferase CARM1 (608 aa).

At alanine 2 the chain carries N-acetylalanine. Residues 27 to 138 (ATVSVFPGAR…GHTLERSVFS (112 aa)) are interaction with C9orf72. One can recognise an SAM-dependent MTase PRMT-type domain in the interval 146 to 453 (AVQYFQFYGY…KRQSYDISIV (308 aa)). Glutamine 159, arginine 168, glycine 192, and glutamate 214 together coordinate S-adenosyl-L-methionine. A Phosphoserine modification is found at serine 216. Residue lysine 227 forms a Glycyl lysine isopeptide (Lys-Gly) (interchain with G-Cter in ubiquitin) linkage. Residues glutamate 243 and serine 271 each coordinate S-adenosyl-L-methionine. Positions 346 to 379 (RILMAKSVKYTVNFLEAKEGDLHRIEIPFKFHML) are required for nuclear translocation. The interval 499 to 608 (TGSTYNLSSG…IPTNTMHYGS (110 aa)) is transactivation domain. A Dimethylated arginine modification is found at arginine 550.

Belongs to the class I-like SAM-binding methyltransferase superfamily. Protein arginine N-methyltransferase family. Homodimer. Interacts with NR1H4. Interacts with SNRPC. Interacts with the C-terminus of NCOA2/GRIP1, NCO3/ACTR and NCOA1/SRC1. Part of a complex consisting of CARM1, EP300/P300 and NCOA2/GRIP1. Interacts with FLII, TP53, myogenic factor MEF2, EP300/P300, TRIM24, CREBBP and CTNNB1. Interacts with RELA. Identified in a complex containing CARM1, TRIM24 and NCOA2/GRIP1. Interacts with NCOA3/SRC3. Interacts with SKP2. Interacts (via PH domain-like fold) with C9orf72. Interacts with PARP1; promoting PARP1 recruimtent to replication forks. In terms of assembly, (Microbial infection) Interacts with HTLV-1 protein Tax. In terms of processing, auto-methylated on Arg-550. Methylation enhances transcription coactivator activity. Methylation is required for its role in the regulation of pre-mRNA alternative splicing. Phosphorylation at Ser-216 is strongly increased during mitosis, and decreases rapidly to a very low, basal level after entry into the G1 phase of the cell cycle. Phosphorylation at Ser-216 may promote location in the cytosol. Phosphorylation at Ser-216 interferes with S-adenosyl-L-methionine binding and strongly reduces methyltransferase activity. Post-translationally, ubiquitinated by E3 ubiquitin-protein ligase complex containing FBXO9 at Lys-227; leading to proteasomal degradation. As to expression, overexpressed in prostate adenocarcinomas and high-grade prostatic intraepithelial neoplasia.

The protein resides in the nucleus. It is found in the cytoplasm. Its subcellular location is the chromosome. It carries out the reaction L-arginyl-[protein] + 2 S-adenosyl-L-methionine = N(omega),N(omega)-dimethyl-L-arginyl-[protein] + 2 S-adenosyl-L-homocysteine + 2 H(+). Its activity is regulated as follows. Methylation of H3R17 (H3R17me) by CARM1 is stimulated by preacetylation of H3 'Lys-18' (H3K18ac) H3 'Lys-23' (H3K23ac) by EP300 and blocked by citrullination of H3 'Arg-17' (H3R17ci) by PADI4. Functionally, methylates (mono- and asymmetric dimethylation) the guanidino nitrogens of arginyl residues in several proteins involved in DNA packaging, transcription regulation, pre-mRNA splicing, and mRNA stability. Recruited to promoters upon gene activation together with histone acetyltransferases from EP300/P300 and p160 families, methylates histone H3 at 'Arg-17' (H3R17me), forming mainly asymmetric dimethylarginine (H3R17me2a), leading to activation of transcription via chromatin remodeling. During nuclear hormone receptor activation and TCF7L2/TCF4 activation, acts synergically with EP300/P300 and either one of the p160 histone acetyltransferases NCOA1/SRC1, NCOA2/GRIP1 and NCOA3/ACTR or CTNNB1/beta-catenin to activate transcription. During myogenic transcriptional activation, acts together with NCOA3/ACTR as a coactivator for MEF2C. During monocyte inflammatory stimulation, acts together with EP300/P300 as a coactivator for NF-kappa-B. Acts as a coactivator for PPARG, promotes adipocyte differentiation and the accumulation of brown fat tissue. Plays a role in the regulation of pre-mRNA alternative splicing by methylation of splicing factors. Also seems to be involved in p53/TP53 transcriptional activation. Methylates EP300/P300, both at 'Arg-2142', which may loosen its interaction with NCOA2/GRIP1, and at 'Arg-580' and 'Arg-604' in the KIX domain, which impairs its interaction with CREB and inhibits CREB-dependent transcriptional activation. Also methylates arginine residues in RNA-binding proteins PABPC1, ELAVL1 and ELAV4, which may affect their mRNA-stabilizing properties and the half-life of their target mRNAs. Acts as a transcriptional coactivator of ACACA/acetyl-CoA carboxylase by enriching H3R17 methylation at its promoter, thereby positively regulating fatty acid synthesis. Independently of its methyltransferase activity, involved in replication fork progression: promotes PARP1 recruitment to replication forks, leading to poly-ADP-ribosylation of chromatin at replication forks and reduced fork speed. This is Histone-arginine methyltransferase CARM1 (CARM1) from Homo sapiens (Human).